The chain runs to 500 residues: Nuclear distribution protein PAC1 (500 aa).

WD repeat units lie at residues 125-164 (HNGH…EPQQ), 169-219 (AHTR…NLKA), 225-265 (GHEN…IVLS), 268-310 (GHSN…LMIG), 338-378 (QNEL…IRSD), 397-436 (EHKS…ESNL), and 459-500 (IKDQ…EYIL).

It belongs to the WD repeat LIS1/nudF family. In terms of assembly, self-associates. Interacts with NDL1 and dynein.

It is found in the cytoplasm. Its subcellular location is the cytoskeleton. The protein localises to the spindle pole. Its function is as follows. Positively regulates the activity of the minus-end directed microtubule motor protein dynein. Plays a central role in positioning the mitotic spindle at the bud neck during cell division. Targets cytoplasmic dynein to microtubule plus ends, thereby promoting dynein-mediated microtubule sliding along the bud cortex and consequently the movement of the mitotic spindle to the bud neck. The chain is Nuclear distribution protein PAC1 from Komagataella phaffii (strain GS115 / ATCC 20864) (Yeast).